A 212-amino-acid chain; its full sequence is Pyridoxine/pyridoxamine 5'-phosphate oxidase (212 aa).

Residues Arg59–Lys64, Tyr74–Ser75, Lys81, and Gln103 contribute to the FMN site. Lys64 is a binding site for substrate. Residues Tyr121 and Arg125 each contribute to the substrate site. FMN is bound by residues Gln138–Ser139 and Trp183. Residue Arg189–His191 coordinates substrate. An FMN-binding site is contributed by Arg193.

Belongs to the pyridoxamine 5'-phosphate oxidase family. Homodimer. Requires FMN as cofactor.

The catalysed reaction is pyridoxamine 5'-phosphate + O2 + H2O = pyridoxal 5'-phosphate + H2O2 + NH4(+). It catalyses the reaction pyridoxine 5'-phosphate + O2 = pyridoxal 5'-phosphate + H2O2. It participates in cofactor metabolism; pyridoxal 5'-phosphate salvage; pyridoxal 5'-phosphate from pyridoxamine 5'-phosphate: step 1/1. The protein operates within cofactor metabolism; pyridoxal 5'-phosphate salvage; pyridoxal 5'-phosphate from pyridoxine 5'-phosphate: step 1/1. Catalyzes the oxidation of either pyridoxine 5'-phosphate (PNP) or pyridoxamine 5'-phosphate (PMP) into pyridoxal 5'-phosphate (PLP). In Rhodopseudomonas palustris (strain HaA2), this protein is Pyridoxine/pyridoxamine 5'-phosphate oxidase.